The chain runs to 474 residues: Cysteine--tRNA ligase (474 aa).

Residue Cys-29 participates in Zn(2+) binding. Residues 31–41 carry the 'HIGH' region motif; sequence ITPYDHVHVGH. The Zn(2+) site is built by Cys-215, His-240, and Glu-244. Residues 273-277 carry the 'KMSKS' region motif; that stretch reads KMSKS. ATP is bound at residue Lys-276.

The protein belongs to the class-I aminoacyl-tRNA synthetase family. Requires Zn(2+) as cofactor.

The protein localises to the cytoplasm. The catalysed reaction is tRNA(Cys) + L-cysteine + ATP = L-cysteinyl-tRNA(Cys) + AMP + diphosphate. The protein is Cysteine--tRNA ligase of Pyrobaculum aerophilum (strain ATCC 51768 / DSM 7523 / JCM 9630 / CIP 104966 / NBRC 100827 / IM2).